The following is a 200-amino-acid chain: Peroxiredoxin (200 aa).

Residues 6–165 (AQIGKPAPEF…TLRLVQAFQH (160 aa)) form the Thioredoxin domain. Cysteine 52 (cysteine sulfenic acid (-SOH) intermediate) is an active-site residue.

It belongs to the peroxiredoxin family. AhpC/Prx1 subfamily. Homodimer; disulfide-linked, upon oxidation.

It catalyses the reaction a hydroperoxide + [thioredoxin]-dithiol = an alcohol + [thioredoxin]-disulfide + H2O. Thiol-specific peroxidase that catalyzes the reduction of hydrogen peroxide and organic hydroperoxides to water and alcohols, respectively. Plays a role in cell protection against oxidative stress by detoxifying peroxides and as sensor of hydrogen peroxide-mediated signaling events. This chain is Peroxiredoxin, found in Cynops pyrrhogaster (Japanese fire-bellied newt).